A 355-amino-acid chain; its full sequence is Transcription factor TGAL9 (355 aa).

2 disordered regions span residues 83–104 (FPSQPMHAGEPSPKGSSSMAAI) and 118–188 (GSSK…DAKT). The span at 118-134 (GSSKRPPAAAAAGGQPS) shows a compositional bias: low complexity. The span at 135 to 144 (RLNNPADQPS) shows a compositional bias: polar residues. 2 stretches are compositionally biased toward basic and acidic residues: residues 148-159 (KDGKAAVVKKEG) and 176-188 (SEHEGPKTPDAKT). The 46-residue stretch at 185-230 (DAKTLRRLAQNREAARKSRLRKKAYIQNLETSRIRLSQLEQELVQR) folds into the bZIP domain. Positions 187 to 207 (KTLRRLAQNREAARKSRLRKK) are basic motif. Residues 213 to 227 (LETSRIRLSQLEQEL) form a leucine-zipper region. The 102-residue stretch at 254–355 (AAWFDGEYAR…RPSELIKVST (102 aa)) folds into the DOG1 domain.

The protein belongs to the bZIP family. As to quaternary structure, interacts with NPR5/NH4, NH5.1 and NH5.2.

It localises to the nucleus. Functionally, transcriptional regulator involved in defense response. This chain is Transcription factor TGAL9, found in Oryza sativa subsp. japonica (Rice).